The sequence spans 366 residues: UDP-N-acetylglucosamine--N-acetylmuramyl-(pentapeptide) pyrophosphoryl-undecaprenol N-acetylglucosamine transferase (366 aa).

UDP-N-acetyl-alpha-D-glucosamine-binding positions include 14-16 (TGG), Asn125, Arg168, Ser196, and Gln297.

Belongs to the glycosyltransferase 28 family. MurG subfamily.

The protein localises to the cell inner membrane. The catalysed reaction is di-trans,octa-cis-undecaprenyl diphospho-N-acetyl-alpha-D-muramoyl-L-alanyl-D-glutamyl-meso-2,6-diaminopimeloyl-D-alanyl-D-alanine + UDP-N-acetyl-alpha-D-glucosamine = di-trans,octa-cis-undecaprenyl diphospho-[N-acetyl-alpha-D-glucosaminyl-(1-&gt;4)]-N-acetyl-alpha-D-muramoyl-L-alanyl-D-glutamyl-meso-2,6-diaminopimeloyl-D-alanyl-D-alanine + UDP + H(+). It participates in cell wall biogenesis; peptidoglycan biosynthesis. Functionally, cell wall formation. Catalyzes the transfer of a GlcNAc subunit on undecaprenyl-pyrophosphoryl-MurNAc-pentapeptide (lipid intermediate I) to form undecaprenyl-pyrophosphoryl-MurNAc-(pentapeptide)GlcNAc (lipid intermediate II). This chain is UDP-N-acetylglucosamine--N-acetylmuramyl-(pentapeptide) pyrophosphoryl-undecaprenol N-acetylglucosamine transferase, found in Bradyrhizobium diazoefficiens (strain JCM 10833 / BCRC 13528 / IAM 13628 / NBRC 14792 / USDA 110).